We begin with the raw amino-acid sequence, 317 residues long: Putative 2-hydroxyacid dehydrogenase SE_1879 (317 aa).

Residues 155-156, 234-236, and Asp-260 each bind NAD(+); these read EI and AGR. Arg-236 is an active-site residue. Residue Glu-265 is part of the active site. His-283 functions as the Proton donor in the catalytic mechanism. 283 to 286 is an NAD(+) binding site; sequence HIGN.

It belongs to the D-isomer specific 2-hydroxyacid dehydrogenase family.

This chain is Putative 2-hydroxyacid dehydrogenase SE_1879, found in Staphylococcus epidermidis (strain ATCC 12228 / FDA PCI 1200).